Reading from the N-terminus, the 588-residue chain is Glycoprotein (588 aa).

Residues 1–22 form the signal peptide; the sequence is MSILVIILILPILFGEVPPVNS. At 23 to 547 the chain is on the virion surface side; the sequence is GRVVDLNRNV…TTLEEEVKHG (525 aa). Residues 548 to 568 form a helical membrane-spanning segment; sequence VIIVFFTVIGLIIAVPTLKML. Over 569–588 the chain is Intravirion; sequence LKGRRPYEPVKSPVVWGGPR.

The protein belongs to the nucleorhabdovirus glycoprotein family. In terms of assembly, homotrimer. Interacts with matrix protein. In terms of processing, glycosylated by host. Glycosylation is crucial for glycoprotein export at the cell surface.

The protein resides in the virion membrane. Functionally, attaches the virus to host cellular receptor, inducing endocytosis of the virion. In the endosome, the acidic pH induces conformational changes in the glycoprotein trimer, which trigger fusion between virus and cell membrane. In Taro vein chlorosis virus (TAVCV), this protein is Glycoprotein (G).